The following is a 284-amino-acid chain: Bifunctional protein FolD (284 aa).

NADP(+)-binding positions include 164-166 (GRG), Thr-189, and Ile-230.

The protein belongs to the tetrahydrofolate dehydrogenase/cyclohydrolase family. As to quaternary structure, homodimer.

The catalysed reaction is (6R)-5,10-methylene-5,6,7,8-tetrahydrofolate + NADP(+) = (6R)-5,10-methenyltetrahydrofolate + NADPH. The enzyme catalyses (6R)-5,10-methenyltetrahydrofolate + H2O = (6R)-10-formyltetrahydrofolate + H(+). It participates in one-carbon metabolism; tetrahydrofolate interconversion. Functionally, catalyzes the oxidation of 5,10-methylenetetrahydrofolate to 5,10-methenyltetrahydrofolate and then the hydrolysis of 5,10-methenyltetrahydrofolate to 10-formyltetrahydrofolate. The protein is Bifunctional protein FolD of Pelotomaculum thermopropionicum (strain DSM 13744 / JCM 10971 / SI).